The primary structure comprises 73 residues: MTAIFNFESLLFVILLTICTCTYLHRQFPALLEKRKEGVTMVFWKCARIGERASPYISLFCVFMALRFIFGSS.

The signal sequence occupies residues 1 to 21 (MTAIFNFESLLFVILLTICTC). At 22–52 (TYLHRQFPALLEKRKEGVTMVFWKCARIGER) the chain is on the lumenal side. A helical transmembrane segment spans residues 53–73 (ASPYISLFCVFMALRFIFGSS).

It belongs to the KISH family.

It is found in the golgi apparatus membrane. It localises to the endoplasmic reticulum membrane. Its function is as follows. Involved in the early part of the secretory pathway. The polypeptide is Protein kish (ksh1) (Schizosaccharomyces pombe (strain 972 / ATCC 24843) (Fission yeast)).